The primary structure comprises 339 residues: MWQLWASLCCLLVLANARSRPSFHPLSDELVNYVNKRNTTWQAGHNFYNVDMSYLKRLCGTFLGGPKPPQRVMFTEDLKLPASFDAREQWPQCPTIKEIRDQGSCGSCWAFGAVEAISDRICIHTNAHVSVEVSAEDLLTCCGSMCGDGCNGGYPAEAWNFWTRKGLVSGGLYESHVGCRPYSIPPCEHHVNGSRPPCTGEGDTPKCSKICEPGYSPTYKQDKHYGYNSYSVSNSEKDIMAEIYKNGPVEGAFSVYSDFLLYKSGVYQHVTGEMMGGHAIRILGWGVENGTPYWLVANSWNTDWGDNGFFKILRGQDHCGIESEVVAGIPRTDQYWEKI.

Residues 1–17 (MWQLWASLCCLLVLANA) form the signal peptide. The propeptide at 18–79 (RSRPSFHPLS…QRVMFTEDLK (62 aa)) is activation peptide. Cystine bridges form between Cys-93-Cys-122, Cys-105-Cys-150, Cys-141-Cys-207, Cys-142-Cys-146, Cys-179-Cys-211, and Cys-187-Cys-198. Cys-108 is a catalytic residue. An N-linked (GlcNAc...) asparagine glycan is attached at Asn-192. Position 220 is an N6-acetyllysine (Lys-220). Active-site residues include His-278 and Asn-298. Residues 334 to 339 (QYWEKI) constitute a propeptide that is removed on maturation.

Belongs to the peptidase C1 family. Dimer of a heavy chain and a light chain cross-linked by a disulfide bond. Interacts with SRPX2. Directly interacts with SHKBP1. In terms of tissue distribution, expressed in the stratum spinosum of the epidermis. Weak expression is detected in the stratum granulosum.

Its subcellular location is the lysosome. The protein resides in the melanosome. It is found in the secreted. It localises to the extracellular space. The protein localises to the apical cell membrane. It catalyses the reaction Hydrolysis of proteins with broad specificity for peptide bonds. Preferentially cleaves -Arg-Arg-|-Xaa bonds in small molecule substrates (thus differing from cathepsin L). In addition to being an endopeptidase, shows peptidyl-dipeptidase activity, liberating C-terminal dipeptides.. Its activity is regulated as follows. Inhibited by leupeptin. Functionally, thiol protease which is believed to participate in intracellular degradation and turnover of proteins. Cleaves matrix extracellular phosphoglycoprotein MEPE. Involved in the solubilization of cross-linked TG/thyroglobulin in the thyroid follicle lumen. Has also been implicated in tumor invasion and metastasis. This Homo sapiens (Human) protein is Cathepsin B (CTSB).